The primary structure comprises 510 residues: NAD(P)H-quinone oxidoreductase subunit 2 B, chloroplastic (510 aa).

Transmembrane regions (helical) follow at residues 24 to 44 (LLLF…GLIL), 57 to 77 (IPWF…ALLF), 99 to 119 (IFQF…VEYI), 124 to 144 (MAIT…MFLC), 149 to 169 (LITI…LSGY), 183 to 203 (YLLM…WLYG), 227 to 247 (PGIL…LSLA), 295 to 315 (WHLL…LIAI), 323 to 343 (MLAY…IVGD), 354 to 374 (YMLF…LFGL), 395 to 415 (ALSL…AGFF), 428 to 448 (GLYF…YYYL), and 484 to 504 (MIVC…IIAI).

This sequence belongs to the complex I subunit 2 family. As to quaternary structure, NDH is composed of at least 16 different subunits, 5 of which are encoded in the nucleus.

The protein resides in the plastid. It is found in the chloroplast thylakoid membrane. The catalysed reaction is a plastoquinone + NADH + (n+1) H(+)(in) = a plastoquinol + NAD(+) + n H(+)(out). The enzyme catalyses a plastoquinone + NADPH + (n+1) H(+)(in) = a plastoquinol + NADP(+) + n H(+)(out). NDH shuttles electrons from NAD(P)H:plastoquinone, via FMN and iron-sulfur (Fe-S) centers, to quinones in the photosynthetic chain and possibly in a chloroplast respiratory chain. The immediate electron acceptor for the enzyme in this species is believed to be plastoquinone. Couples the redox reaction to proton translocation, and thus conserves the redox energy in a proton gradient. This is NAD(P)H-quinone oxidoreductase subunit 2 B, chloroplastic from Eucalyptus globulus subsp. globulus (Tasmanian blue gum).